Here is a 372-residue protein sequence, read N- to C-terminus: Saccharopine dehydrogenase [NAD(+), L-lysine-forming] (372 aa).

Residues Arg17 and Lys76 each contribute to the L-saccharopine site. The Proton acceptor role is filled by Lys76. His95 (proton donor) is an active-site residue. Residue Gln100 participates in L-saccharopine binding. An NAD(+)-binding site is contributed by Arg129. 2 residues coordinate L-saccharopine: Arg130 and Phe134. Residues 202-203 (GR), Asp226, Thr230, Tyr250, and Val277 each bind NAD(+). Cys204 and Cys248 are disulfide-bonded. 278–280 (SAD) contributes to the L-saccharopine binding site. 317-320 (IDHL) provides a ligand contact to NAD(+). The Microbody targeting signal signature appears at 370–372 (SKL).

The protein belongs to the AlaDH/PNT family. As to quaternary structure, monomer.

The protein resides in the peroxisome. The enzyme catalyses L-saccharopine + NAD(+) + H2O = L-lysine + 2-oxoglutarate + NADH + H(+). Its pathway is amino-acid biosynthesis; L-lysine biosynthesis via AAA pathway; L-lysine from L-alpha-aminoadipate (fungal route): step 3/3. Functionally, catalyzes the NAD(+)-dependent cleavage of saccharopine to L-lysine and 2-oxoglutarate, the final step in the alpha-aminoadipate (AAA) pathway for lysin biosynthesis. The chain is Saccharopine dehydrogenase [NAD(+), L-lysine-forming] (LYS1) from Candida glabrata (strain ATCC 2001 / BCRC 20586 / JCM 3761 / NBRC 0622 / NRRL Y-65 / CBS 138) (Yeast).